The sequence spans 372 residues: DNA double-strand break repair protein Mre11 (372 aa).

Mn(2+) is bound by residues Asp8, His10, Asp49, and Asn84. His85 (proton donor) is an active-site residue. 3 residues coordinate Mn(2+): His161, His190, and His192.

The protein belongs to the MRE11/RAD32 family. As to quaternary structure, homodimer. Forms a heterotetramer composed of two Mre11 subunits and two Rad50 subunits. Requires Mn(2+) as cofactor.

Its activity is regulated as follows. Nuclease activity is regulated by Rad50. Functionally, part of the Rad50/Mre11 complex, which is involved in the early steps of DNA double-strand break (DSB) repair. The complex may facilitate opening of the processed DNA ends to aid in the recruitment of HerA and NurA. Mre11 binds to DSB ends and has both double-stranded 3'-5' exonuclease activity and single-stranded endonuclease activity. This is DNA double-strand break repair protein Mre11 from Methanococcus maripaludis (strain DSM 14266 / JCM 13030 / NBRC 101832 / S2 / LL).